Consider the following 335-residue polypeptide: Zinc finger protein 396 (335 aa).

The region spanning Arg52–Leu134 is the SCAN box domain. 3 C2H2-type zinc fingers span residues Gln251–His273, Tyr279–His301, and Tyr307–His329.

Belongs to the krueppel C2H2-type zinc-finger protein family. As to quaternary structure, isoforms 1 and 2 can both homo- and hetero-associate. In terms of tissue distribution, expressed strongly in liver, moderately in skeletal muscle and weakly in kidney, pancreas, spleen and prostate.

The protein localises to the nucleus. It is found in the cytoplasm. Isoform 1 and isoform 2 act as DNA-dependent transcriptional repressors. The sequence is that of Zinc finger protein 396 (ZNF396) from Homo sapiens (Human).